Here is a 448-residue protein sequence, read N- to C-terminus: tRNA(Ile)-lysidine synthase (448 aa).

Residue S25–S30 coordinates ATP.

It belongs to the tRNA(Ile)-lysidine synthase family.

The protein localises to the cytoplasm. It catalyses the reaction cytidine(34) in tRNA(Ile2) + L-lysine + ATP = lysidine(34) in tRNA(Ile2) + AMP + diphosphate + H(+). In terms of biological role, ligates lysine onto the cytidine present at position 34 of the AUA codon-specific tRNA(Ile) that contains the anticodon CAU, in an ATP-dependent manner. Cytidine is converted to lysidine, thus changing the amino acid specificity of the tRNA from methionine to isoleucine. This Brucella melitensis biotype 2 (strain ATCC 23457) protein is tRNA(Ile)-lysidine synthase.